The primary structure comprises 404 residues: Multidrug resistance protein MdtG (404 aa).

Transmembrane regions (helical) follow at residues 19–39 (LGCF…PLYV), 56–76 (LVFS…GGLA), 90–110 (LGMA…QFLI), 113–133 (ALLG…ATQV), 144–164 (TLST…GLLA), 171–191 (PVFF…FFFI), 222–242 (LFVT…ILTL), 254–274 (IAFI…LSAP), 288–308 (ILIV…FVQT), 317–337 (FLLG…LVYN), and 376–396 (AVFC…WNSL).

The protein belongs to the major facilitator superfamily. DHA1 family. MdtG (TC 2.A.1.2.20) subfamily.

The protein resides in the cell inner membrane. This is Multidrug resistance protein MdtG from Salmonella agona (strain SL483).